A 422-amino-acid polypeptide reads, in one-letter code: MSSLPLRSGEKMESPSISDAVPLHAPEDATADFSQPQSPLHEVDSFPVTESSDDVVVNVSEIPNLSPSDDDFDHERNSGEDRDQDHGENPVETDGVVVPIDELNQKIIRQVEYYFSDENLPTDKFLLNAMKRNKKGFVPISTIATFHKMKKLTRDHALIVSALKESSFLVVSADEKKVKRLSPLPEIRDPKIFTVLVENLPEDHSNENIREIFGKAGSIKSVSICDPNAVEESEKGGKKENFIRTRLHAFVEYETVEAAEKAAATLNNEQDWRNGLRVKLLEQAAGKFAQRRPARREVDKEKDTTGRVHDQTGGEKNKKTREHQNHRLHHSDNPADDDGGNHQKDKNGNKGRVVGQGRRQNHQGGNGIGHGTASSSSHPNYHPVEVSKRPPGPRMPDGTRGFTMGRGKAIPPPTSTQTSHEV.

The disordered stretch occupies residues 1–94 (MSSLPLRSGE…DHGENPVETD (94 aa)). A compositionally biased stretch (low complexity) spans 48–61 (VTESSDDVVVNVSE). The segment covering 73–89 (DHERNSGEDRDQDHGEN) has biased composition (basic and acidic residues). The region spanning 97–188 (VVPIDELNQK…KRLSPLPEIR (92 aa)) is the HTH La-type RNA-binding domain. The region spanning 193–283 (FTVLVENLPE…NGLRVKLLEQ (91 aa)) is the RRM domain. Positions 286 to 422 (GKFAQRRPAR…PTSTQTSHEV (137 aa)) are disordered. A compositionally biased stretch (basic and acidic residues) spans 295–348 (RREVDKEKDTTGRVHDQTGGEKNKKTREHQNHRLHHSDNPADDDGGNHQKDKNG).

The protein resides in the nucleus. Its function is as follows. Transcriptional regulator. In Arabidopsis thaliana (Mouse-ear cress), this protein is La-related protein 6A (LARP6A).